Consider the following 351-residue polypeptide: UDP-3-O-acylglucosamine N-acyltransferase (351 aa).

H240 (proton acceptor) is an active-site residue.

It belongs to the transferase hexapeptide repeat family. LpxD subfamily. Homotrimer.

It carries out the reaction a UDP-3-O-[(3R)-3-hydroxyacyl]-alpha-D-glucosamine + a (3R)-hydroxyacyl-[ACP] = a UDP-2-N,3-O-bis[(3R)-3-hydroxyacyl]-alpha-D-glucosamine + holo-[ACP] + H(+). Its pathway is bacterial outer membrane biogenesis; LPS lipid A biosynthesis. Its function is as follows. Catalyzes the N-acylation of UDP-3-O-acylglucosamine using 3-hydroxyacyl-ACP as the acyl donor. Is involved in the biosynthesis of lipid A, a phosphorylated glycolipid that anchors the lipopolysaccharide to the outer membrane of the cell. This Pseudomonas putida (strain ATCC 47054 / DSM 6125 / CFBP 8728 / NCIMB 11950 / KT2440) protein is UDP-3-O-acylglucosamine N-acyltransferase.